The sequence spans 128 residues: Glycine cleavage system H protein (128 aa).

A Lipoyl-binding domain is found at 24 to 106 (VATVGITAFA…YNNGWLLKIK (83 aa)). Lysine 65 is subject to N6-lipoyllysine.

The protein belongs to the GcvH family. As to quaternary structure, the glycine cleavage system is composed of four proteins: P, T, L and H. The cofactor is (R)-lipoate.

The glycine cleavage system catalyzes the degradation of glycine. The H protein shuttles the methylamine group of glycine from the P protein to the T protein. This Acaryochloris marina (strain MBIC 11017) protein is Glycine cleavage system H protein.